A 104-amino-acid chain; its full sequence is Cell division protein FtsB (104 aa).

At 1-3 (MGK) the chain is on the cytoplasmic side. The chain crosses the membrane as a helical span at residues 4 to 21 (LTLLLLVLLGWLQYSLWL). Over 22 to 104 (GKNGIHDYTR…NAQQGRPASQ (83 aa)) the chain is Periplasmic. Positions 33-62 (DEDVASQQGNNAKLKARNDRLFAEIDDLNG) form a coiled coil.

The protein belongs to the FtsB family. In terms of assembly, part of a complex composed of FtsB, FtsL and FtsQ.

The protein localises to the cell inner membrane. Functionally, essential cell division protein. May link together the upstream cell division proteins, which are predominantly cytoplasmic, with the downstream cell division proteins, which are predominantly periplasmic. This Erwinia tasmaniensis (strain DSM 17950 / CFBP 7177 / CIP 109463 / NCPPB 4357 / Et1/99) protein is Cell division protein FtsB.